The following is a 137-amino-acid chain: MSGNGAQGTKFRISLGLPVGAIMNCADNSGARNLYIIAVKGSGSRLNRLPAASLGDMVMATVKKGKPELRKKVMPAIVVRQAKSWRRRDGVFLYFEDNAGVIANPKGEMKGSAITGPVGKECADLWPRVASNSGVVV.

Position 2 is an N-acetylserine (S2). K106 and K110 each carry N6,N6-dimethyllysine; by RKM1.

This sequence belongs to the universal ribosomal protein uL14 family. As to quaternary structure, component of the large ribosomal subunit (LSU). Mature yeast ribosomes consist of a small (40S) and a large (60S) subunit. The 40S small subunit contains 1 molecule of ribosomal RNA (18S rRNA) and 33 different proteins (encoded by 57 genes). The large 60S subunit contains 3 rRNA molecules (25S, 5.8S and 5S rRNA) and 46 different proteins (encoded by 81 genes). In terms of processing, methylated by RKM1 at 2 different sites, but it is unclear which are the 2 methylated residues among Lys-40, Lys-106 and/or Lys-110.

It localises to the cytoplasm. Its function is as follows. Component of the ribosome, a large ribonucleoprotein complex responsible for the synthesis of proteins in the cell. The small ribosomal subunit (SSU) binds messenger RNAs (mRNAs) and translates the encoded message by selecting cognate aminoacyl-transfer RNA (tRNA) molecules. The large subunit (LSU) contains the ribosomal catalytic site termed the peptidyl transferase center (PTC), which catalyzes the formation of peptide bonds, thereby polymerizing the amino acids delivered by tRNAs into a polypeptide chain. The nascent polypeptides leave the ribosome through a tunnel in the LSU and interact with protein factors that function in enzymatic processing, targeting, and the membrane insertion of nascent chains at the exit of the ribosomal tunnel. This is Large ribosomal subunit protein uL14A from Saccharomyces cerevisiae (strain ATCC 204508 / S288c) (Baker's yeast).